A 338-amino-acid polypeptide reads, in one-letter code: mRNA decay activator protein ZFP36L1 (338 aa).

The necessary and sufficient for the association with mRNA decay enzymes and mRNA decay activation stretch occupies residues 1–111 (MTTTLVSATI…QKQPGSGQVN (111 aa)). Ser54 is modified (phosphoserine; by MAPKAPK2). Ser90 bears the Phosphoserine; by PKB/AKT1 mark. At Ser92 the chain carries Phosphoserine; by PKB/AKT1 and MAPKAPK2. The segment at 93–113 (EGGERLLPTQKQPGSGQVNSS) is disordered. Positions 101 to 113 (TQKQPGSGQVNSS) are enriched in polar residues. C3H1-type zinc fingers lie at residues 114-142 (RYKT…HGIH) and 152-180 (KYKT…HNAE). Residues 185 to 338 (LAGGRDLSAD…IFSRLSISDD (154 aa)) form a necessary for mRNA decay activation region. Ser203 bears the Phosphoserine; by PKB/AKT1 and MAPKAPK2 mark. A disordered region spans residues 273–338 (SPTTFLFRPM…IFSRLSISDD (66 aa)). The segment covering 305–318 (YLSSSSSSHSGSDS) has biased composition (low complexity). Residue Ser318 is modified to Phosphoserine. Ser334 is subject to Phosphoserine; by RPS6KA1.

Associates with the cytoplasmic CCR4-NOT deadenylase and RNA exosome complexes to trigger ARE-containing mRNA deadenylation and decay processes. Interacts with CNOT1. Interacts (via N-terminus) with CNOT6. Interacts with CNOT7; this interaction is inhibited in response to phorbol 12-myristate 13-acetate (PMA) treatment in a p38 MAPK-dependent manner. Interacts with DCP1A. Interacts (via N-terminus) with DCP2. Interacts (via N-terminus) with EXOSC2. Interacts with XRN1. Interacts (via phosphorylated form) with YWHAB; this interaction occurs in a protein kinase AKT1-dependent manner. Interacts (via phosphorylated form) with YWHAZ; this interaction occurs in a p38 MAPK- and AKT-signaling pathways. Phosphorylated. Phosphorylated by RPS6KA1 at Ser-334 upon phorbol 12-myristate 13-acetate (PMA) treatment; this phosphorylation results in dissociation of the CCR4-NOT deadenylase complex and induces p38 MAPK-mediated stabilization of the low-density lipoprotein receptor LDLR mRNA. Phosphorylated by protein kinase AKT1 at Ser-92 and Ser-203 in response to insulin; these phosphorylations stabilize ZFP36L1, increase the association with 14-3-3 proteins and mediate ARE-containing mRNA stabilization. AKT1-mediated phosphorylation at Ser-92 does not impair ARE-containing RNA-binding. Phosphorylated at Ser-54, Ser-92 and Ser-203 by MAPKAPK2; these phosphorylations increase the association with 14-3-3 proteins and mediate ARE-containing mRNA stabilization in a protein kinase AKT1-independent manner. MAPKAPK2-mediated phosphorylations at Ser-54, Ser-92 and Ser-203 do not impair ARE-containing RNA-binding. Phosphorylations increase the association with 14-3-3 proteins and mediate ARE-containing mRNA stabilization during early adipogenesis in a p38 MAPK- and AKT-dependent manner. Phosphorylated by protein kinase AKT1 at Ser-92. Post-translationally, ubiquitinated. Ubiquitination leads to proteasomal degradation, a process inhibited by phosphorylations at Ser-90, Ser-92 and Ser-203.

It localises to the nucleus. The protein resides in the cytoplasm. It is found in the cytoplasmic granule. The protein localises to the P-body. Its function is as follows. Zinc-finger RNA-binding protein that destabilizes several cytoplasmic AU-rich element (ARE)-containing mRNA transcripts by promoting their poly(A) tail removal or deadenylation, and hence provide a mechanism for attenuating protein synthesis. Acts as a 3'-untranslated region (UTR) ARE mRNA-binding adapter protein to communicate signaling events to the mRNA decay machinery. Functions by recruiting the CCR4-NOT deadenylase complex and components of the cytoplasmic RNA decay machinery to the bound ARE-containing mRNAs, and hence promotes ARE-mediated mRNA deadenylation and decay processes. Also induces the degradation of ARE-containing mRNAs even in absence of poly(A) tail. Binds to 3'-UTR ARE of numerous mRNAs. Positively regulates early adipogenesis by promoting ARE-mediated mRNA decay of immediate early genes (IEGs). Promotes ARE-mediated mRNA decay of mineralocorticoid receptor NR3C2 mRNA in response to hypertonic stress. Negatively regulates hematopoietic/erythroid cell differentiation by promoting ARE-mediated mRNA decay of the transcription factor STAT5B mRNA. Positively regulates monocyte/macrophage cell differentiation by promoting ARE-mediated mRNA decay of the cyclin-dependent kinase CDK6 mRNA. Promotes degradation of ARE-containing pluripotency-associated mRNAs in embryonic stem cells (ESCs), such as NANOG, through a fibroblast growth factor (FGF)-induced MAPK-dependent signaling pathway, and hence attenuates ESC self-renewal and positively regulates mesendoderm differentiation. May play a role in mediating pro-apoptotic effects in malignant B-cells by promoting ARE-mediated mRNA decay of BCL2 mRNA. In association with ZFP36L2 maintains quiescence on developing B lymphocytes by promoting ARE-mediated decay of several mRNAs encoding cell cycle regulators that help B cells progress through the cell cycle, and hence ensuring accurate variable-diversity-joining (VDJ) recombination and functional immune cell formation. Together with ZFP36L2 is also necessary for thymocyte development and prevention of T-cell acute lymphoblastic leukemia (T-ALL) transformation by promoting ARE-mediated mRNA decay of the oncogenic transcription factor NOTCH1 mRNA. Participates in the delivery of target ARE-mRNAs to processing bodies (PBs). In addition to its cytosolic mRNA-decay function, plays a role in the regulation of nuclear mRNA 3'-end processing; modulates mRNA 3'-end maturation efficiency of the DLL4 mRNA through binding with an ARE embedded in a weak noncanonical polyadenylation (poly(A)) signal in endothelial cells. Also involved in the regulation of stress granule (SG) and P-body (PB) formation and fusion. Plays a role in vasculogenesis and endocardial development. Plays a role in the regulation of keratinocyte proliferation, differentiation and apoptosis. Plays a role in myoblast cell differentiation. The sequence is that of mRNA decay activator protein ZFP36L1 from Rattus norvegicus (Rat).